The primary structure comprises 158 residues: MSIEVTVEIPKGSRNKYEIDHETGKVYLDRYLFTPMAYPLDYGYIDHTLGEDGDPLDALVILPESVFPAVVVKSRIIGVFKMTDEAGGDDKLLSVLDDPRYDHIQDISDVSDFLKDEIEHFFVHYKDLEKGKHVDGSGWGDKAEAEKIHAEAIDRYKA.

Position 8 (E8) interacts with Mg(2+). Substrate-binding residues include K16, R30, and Y42. D52, D57, D84, and D89 together coordinate Mg(2+). The Proton acceptor role is filled by D89. Y125 provides a ligand contact to substrate.

It belongs to the PPase family. In terms of assembly, homohexamer. Requires Mg(2+) as cofactor.

It localises to the cytoplasm. It carries out the reaction diphosphate + H2O = 2 phosphate + H(+). Functionally, catalyzes the hydrolysis of inorganic pyrophosphate (PPi) forming two phosphate ions. This chain is Inorganic pyrophosphatase, found in Corynebacterium glutamicum (strain ATCC 13032 / DSM 20300 / JCM 1318 / BCRC 11384 / CCUG 27702 / LMG 3730 / NBRC 12168 / NCIMB 10025 / NRRL B-2784 / 534).